Consider the following 772-residue polypeptide: Mitochondrial intermediate peptidase (772 aa).

Residues 1 to 33 (MLARPSTTVLARRPFFRFRGCLNEPRPTKARCL) constitute a mitochondrion transit peptide. His556 lines the Zn(2+) pocket. The active site involves Glu557. Residues His560 and His563 each coordinate Zn(2+).

Belongs to the peptidase M3 family. It depends on Zn(2+) as a cofactor.

It is found in the mitochondrion matrix. It catalyses the reaction Release of an N-terminal octapeptide as second stage of processing of some proteins imported into the mitochondrion.. Cleaves proteins, imported into the mitochondrion, to their mature size. While most mitochondrial precursor proteins are processed to the mature form in one step by mitochondrial processing peptidase (MPP), the sequential cleavage by MIP of an octapeptide after initial processing by MPP is a required step for a subgroup of nuclear-encoded precursor proteins destined for the matrix or the inner membrane. The chain is Mitochondrial intermediate peptidase (OCT1) from Coprinopsis scobicola (Ink cap fungus).